The sequence spans 198 residues: NAD(P)H-quinone oxidoreductase chain 6 (198 aa).

Helical transmembrane passes span 9 to 29 (YISF…VVLL), 32 to 52 (IVYS…IYIL), 61 to 81 (AQVL…IMLV), 100 to 120 (TALV…ITPW), and 145 to 165 (LLPF…AIIL).

Belongs to the complex I subunit 6 family.

It is found in the membrane. It carries out the reaction a plastoquinone + NADH + (n+1) H(+)(in) = a plastoquinol + NAD(+) + n H(+)(out). The catalysed reaction is a plastoquinone + NADPH + (n+1) H(+)(in) = a plastoquinol + NADP(+) + n H(+)(out). In terms of biological role, NDH-1 shuttles electrons from NAD(P)H, via FMN and iron-sulfur (Fe-S) centers, to quinones in the respiratory chain. The immediate electron acceptor for the enzyme in this species is believed to be plastoquinone. Couples the redox reaction to proton translocation (for every two electrons transferred, four hydrogen ions are translocated across the cytoplasmic membrane), and thus conserves the redox energy in a proton gradient. The protein is NAD(P)H-quinone oxidoreductase chain 6 (ndhG) of Synechocystis sp. (strain ATCC 27184 / PCC 6803 / Kazusa).